Here is a 216-residue protein sequence, read N- to C-terminus: Ribonuclease HII (216 aa).

The region spanning Ala-27–Gly-216 is the RNase H type-2 domain. Residues Asp-33, Glu-34, and Asp-125 each coordinate a divalent metal cation.

It belongs to the RNase HII family. Mn(2+) is required as a cofactor. Requires Mg(2+) as cofactor.

Its subcellular location is the cytoplasm. The catalysed reaction is Endonucleolytic cleavage to 5'-phosphomonoester.. In terms of biological role, endonuclease that specifically degrades the RNA of RNA-DNA hybrids. The sequence is that of Ribonuclease HII from Geotalea daltonii (strain DSM 22248 / JCM 15807 / FRC-32) (Geobacter daltonii).